A 246-amino-acid chain; its full sequence is tRNA (guanine-N(1)-)-methyltransferase (246 aa).

S-adenosyl-L-methionine contacts are provided by residues Gly-114 and 134 to 139 (IGDYIL).

It belongs to the RNA methyltransferase TrmD family. As to quaternary structure, homodimer.

The protein resides in the cytoplasm. The catalysed reaction is guanosine(37) in tRNA + S-adenosyl-L-methionine = N(1)-methylguanosine(37) in tRNA + S-adenosyl-L-homocysteine + H(+). Its function is as follows. Specifically methylates guanosine-37 in various tRNAs. The protein is tRNA (guanine-N(1)-)-methyltransferase of Coxiella burnetii (strain CbuK_Q154) (Coxiella burnetii (strain Q154)).